The sequence spans 570 residues: Sulfite reductase [NADPH] hemoprotein beta-component (570 aa).

[4Fe-4S] cluster contacts are provided by Cys434, Cys440, Cys479, and Cys483. Cys483 contacts siroheme.

Belongs to the nitrite and sulfite reductase 4Fe-4S domain family. In terms of assembly, alpha(8)-beta(8). The alpha component is a flavoprotein, the beta component is a hemoprotein. Requires siroheme as cofactor. The cofactor is [4Fe-4S] cluster.

It catalyses the reaction hydrogen sulfide + 3 NADP(+) + 3 H2O = sulfite + 3 NADPH + 4 H(+). It functions in the pathway sulfur metabolism; hydrogen sulfide biosynthesis; hydrogen sulfide from sulfite (NADPH route): step 1/1. Component of the sulfite reductase complex that catalyzes the 6-electron reduction of sulfite to sulfide. This is one of several activities required for the biosynthesis of L-cysteine from sulfate. The protein is Sulfite reductase [NADPH] hemoprotein beta-component of Escherichia coli O6:H1 (strain CFT073 / ATCC 700928 / UPEC).